The following is a 299-amino-acid chain: Coenzyme PQQ synthesis protein B (299 aa).

The protein belongs to the PqqB family.

It functions in the pathway cofactor biosynthesis; pyrroloquinoline quinone biosynthesis. May be involved in the transport of PQQ or its precursor to the periplasm. The chain is Coenzyme PQQ synthesis protein B from Methylorubrum extorquens (strain ATCC 14718 / DSM 1338 / JCM 2805 / NCIMB 9133 / AM1) (Methylobacterium extorquens).